The chain runs to 349 residues: Anthranilate phosphoribosyltransferase (349 aa).

5-phospho-alpha-D-ribose 1-diphosphate-binding positions include Gly-94, 97–98 (GD), Thr-102, 104–107 (NIST), 122–130 (KHGNRSVSS), and Ser-134. Anthranilate is bound at residue Gly-94. Ser-106 is a Mg(2+) binding site. An anthranilate-binding site is contributed by Asn-125. Arg-180 lines the anthranilate pocket. Positions 239 and 240 each coordinate Mg(2+).

This sequence belongs to the anthranilate phosphoribosyltransferase family. In terms of assembly, homodimer. Mg(2+) is required as a cofactor.

The enzyme catalyses N-(5-phospho-beta-D-ribosyl)anthranilate + diphosphate = 5-phospho-alpha-D-ribose 1-diphosphate + anthranilate. Its pathway is amino-acid biosynthesis; L-tryptophan biosynthesis; L-tryptophan from chorismate: step 2/5. Its function is as follows. Catalyzes the transfer of the phosphoribosyl group of 5-phosphorylribose-1-pyrophosphate (PRPP) to anthranilate to yield N-(5'-phosphoribosyl)-anthranilate (PRA). This is Anthranilate phosphoribosyltransferase from Trichlorobacter lovleyi (strain ATCC BAA-1151 / DSM 17278 / SZ) (Geobacter lovleyi).